The following is a 202-amino-acid chain: Small ribosomal subunit protein uS4 (202 aa).

A disordered region spans residues 16 to 42 (GELPGLSRKNPRRAYPPGQHGQARKKR). In terms of domain architecture, S4 RNA-binding spans 90–151 (MRLDNTVFRL…QERSRRLVEA (62 aa)).

Belongs to the universal ribosomal protein uS4 family. In terms of assembly, part of the 30S ribosomal subunit. Contacts protein S5. The interaction surface between S4 and S5 is involved in control of translational fidelity.

Functionally, one of the primary rRNA binding proteins, it binds directly to 16S rRNA where it nucleates assembly of the body of the 30S subunit. Its function is as follows. With S5 and S12 plays an important role in translational accuracy. The polypeptide is Small ribosomal subunit protein uS4 (Rippkaea orientalis (strain PCC 8801 / RF-1) (Cyanothece sp. (strain PCC 8801))).